Consider the following 883-residue polypeptide: DNA topoisomerase 1 (883 aa).

One can recognise a Toprim domain in the interval 2–126; sequence PKLVIVESPT…TKRMVFHEIT (125 aa). Mg(2+)-binding residues include E8 and D95. Residues 141–583 form the Topo IA-type catalytic domain; sequence DQRLVHAQET…QFYRGDRGLE (443 aa). Positions 175–180 are interaction with DNA; it reads SAGRVQ. Residues 271 to 294 form a disordered region; sequence SLEEKPTTRKPAPPFTTSTLQQES. Y320 acts as the O-(5'-phospho-DNA)-tyrosine intermediate in catalysis. Positions 842 to 883 are disordered; it reads AKAGQAKAKGGRRSTGTPKSGETKARTTKTTKKTTTRRTTSR. The segment covering 867–883 has biased composition (basic residues); that stretch reads RTTKTTKKTTTRRTTSR.

The protein belongs to the type IA topoisomerase family. In terms of assembly, monomer. It depends on Mg(2+) as a cofactor.

It carries out the reaction ATP-independent breakage of single-stranded DNA, followed by passage and rejoining.. Functionally, releases the supercoiling and torsional tension of DNA, which is introduced during the DNA replication and transcription, by transiently cleaving and rejoining one strand of the DNA duplex. Introduces a single-strand break via transesterification at a target site in duplex DNA. The scissile phosphodiester is attacked by the catalytic tyrosine of the enzyme, resulting in the formation of a DNA-(5'-phosphotyrosyl)-enzyme intermediate and the expulsion of a 3'-OH DNA strand. The free DNA strand then undergoes passage around the unbroken strand, thus removing DNA supercoils. Finally, in the religation step, the DNA 3'-OH attacks the covalent intermediate to expel the active-site tyrosine and restore the DNA phosphodiester backbone. The protein is DNA topoisomerase 1 of Synechococcus elongatus (strain ATCC 33912 / PCC 7942 / FACHB-805) (Anacystis nidulans R2).